We begin with the raw amino-acid sequence, 419 residues long: Carboxypeptidase A1 (419 aa).

Positions 1-16 (MWGLLIFSVLLGGVLA) are cleaved as a signal peptide. A propeptide spans 17–110 (KEDFVGHQVL…QEQMFASQGR (94 aa)) (activation peptide). The Peptidase M14 domain occupies 121–414 (TYHTLEEIYD…LALLTIMEHT (294 aa)). His-179 and Glu-182 together coordinate Zn(2+). Substrate contacts are provided by residues 179-182 (HSRE), Arg-237, and 254-255 (NR). Cys-248 and Cys-271 are oxidised to a cystine. His-306 provides a ligand contact to Zn(2+). Residues 307–308 (SY) and Tyr-358 each bind substrate. Residue Glu-380 is the Proton donor/acceptor of the active site.

Belongs to the peptidase M14 family. In terms of assembly, monomer. May form a complex with proelastase 2. The cofactor is Zn(2+).

The protein localises to the secreted. The catalysed reaction is Release of a C-terminal amino acid, but little or no action with -Asp, -Glu, -Arg, -Lys or -Pro.. It catalyses the reaction leukotriene C4 + H2O = leukotriene F4 + glycine. In terms of biological role, carboxypeptidase that catalyzes the release of a C-terminal amino acid, but has little or no action with -Asp, -Glu, -Arg, -Lys or -Pro. Catalyzes the conversion of leukotriene C4 to leukotriene F4 via the hydrolysis of an amide bond. The chain is Carboxypeptidase A1 (CPA1) from Sus scrofa (Pig).